We begin with the raw amino-acid sequence, 234 residues long: Thymidylate kinase (234 aa).

Residue 20–27 (GIDASGKT) coordinates ATP.

Belongs to the thymidylate kinase family.

The enzyme catalyses dTMP + ATP = dTDP + ADP. In terms of biological role, phosphorylation of dTMP to form dTDP in both de novo and salvage pathways of dTTP synthesis. The chain is Thymidylate kinase from Mycoplasmopsis pulmonis (strain UAB CTIP) (Mycoplasma pulmonis).